Consider the following 490-residue polypeptide: AP-5 complex subunit mu-1 (490 aa).

One can recognise an MHD domain in the interval 206 to 476; sequence KPQVSISITE…LISSDYYIWN (271 aa).

Belongs to the adaptor complexes medium subunit family. In terms of assembly, probably part of the adaptor protein complex 5 (AP-5) a tetramer composed of AP5B1, AP5M1, AP5S1 and AP5Z1.

Its subcellular location is the cytoplasm. It localises to the cytosol. It is found in the late endosome membrane. The protein localises to the lysosome membrane. As part of AP-5, a probable fifth adaptor protein complex it may be involved in endosomal transport. The chain is AP-5 complex subunit mu-1 (AP5M1) from Macaca fascicularis (Crab-eating macaque).